A 118-amino-acid chain; its full sequence is Putative pterin-4-alpha-carbinolamine dehydratase (118 aa).

The protein belongs to the pterin-4-alpha-carbinolamine dehydratase family.

The enzyme catalyses (4aS,6R)-4a-hydroxy-L-erythro-5,6,7,8-tetrahydrobiopterin = (6R)-L-erythro-6,7-dihydrobiopterin + H2O. The protein is Putative pterin-4-alpha-carbinolamine dehydratase of Pseudomonas savastanoi pv. phaseolicola (strain 1448A / Race 6) (Pseudomonas syringae pv. phaseolicola (strain 1448A / Race 6)).